A 394-amino-acid polypeptide reads, in one-letter code: UDP-glucose 6-dehydrogenase (394 aa).

Residues 2 to 19 (KIAI…AVLL), V11, D29, K34, T83, T118, and E145 each bind NAD(+). Substrate is bound by residues 141–145 (EFLRE), K203, N207, 248–252 (YNNPS), and G256. An NAD(+)-binding site is contributed by Y258. C259 functions as the Nucleophile in the catalytic mechanism. K262 provides a ligand contact to NAD(+). K313 lines the substrate pocket. R320 contributes to the NAD(+) binding site.

The protein belongs to the UDP-glucose/GDP-mannose dehydrogenase family.

The enzyme catalyses UDP-alpha-D-glucose + 2 NAD(+) + H2O = UDP-alpha-D-glucuronate + 2 NADH + 3 H(+). The protein operates within nucleotide-sugar biosynthesis; UDP-alpha-D-glucuronate biosynthesis; UDP-alpha-D-glucuronate from UDP-alpha-D-glucose: step 1/1. Its function is as follows. Catalyzes the formation of UDP-glucuronic acid which is required for capsular hyaluronic acid synthesis. Directly responsible for the transformation of some unencapsulated serotype-3 SP mutants to the encapsulated phenotype. This Streptococcus pneumoniae protein is UDP-glucose 6-dehydrogenase (cap3A).